We begin with the raw amino-acid sequence, 155 residues long: Ribosomal RNA large subunit methyltransferase H (155 aa).

Residues Leu-72, Gly-103, and 122–127 each bind S-adenosyl-L-methionine; that span reads LSDLTL.

This sequence belongs to the RNA methyltransferase RlmH family. In terms of assembly, homodimer.

The protein localises to the cytoplasm. The catalysed reaction is pseudouridine(1915) in 23S rRNA + S-adenosyl-L-methionine = N(3)-methylpseudouridine(1915) in 23S rRNA + S-adenosyl-L-homocysteine + H(+). Its function is as follows. Specifically methylates the pseudouridine at position 1915 (m3Psi1915) in 23S rRNA. The chain is Ribosomal RNA large subunit methyltransferase H from Delftia acidovorans (strain DSM 14801 / SPH-1).